The sequence spans 246 residues: Virulence plasmid protein pGP6-D (246 aa).

Belongs to the UPF0137 (pGP6-D) family.

The chain is Virulence plasmid protein pGP6-D from Chlamydia psittaci (Chlamydophila psittaci).